We begin with the raw amino-acid sequence, 206 residues long: MARYLGPKLKLSRREGTDLFLKSGVRAIDSKCKLETAPGQHGARKTRLSEYGVQLREKQKVRRTYGVLEKQFRNYYKDAARTKGNTGENLLTLLETRLDNVVYRMGFGATRAEARQLVSHKSIMVNGSVVNIPSFKVSANDVISIREKSKKQARIIAALEVSSQREKPTWVEVDNTKMEGAFKRLPERSDLSAEINEQLIVELYSK.

In terms of domain architecture, S4 RNA-binding spans 96 to 156 (TRLDNVVYRM…EKSKKQARII (61 aa)).

The protein belongs to the universal ribosomal protein uS4 family. In terms of assembly, part of the 30S ribosomal subunit. Contacts protein S5. The interaction surface between S4 and S5 is involved in control of translational fidelity.

Its function is as follows. One of the primary rRNA binding proteins, it binds directly to 16S rRNA where it nucleates assembly of the body of the 30S subunit. Functionally, with S5 and S12 plays an important role in translational accuracy. This Shewanella woodyi (strain ATCC 51908 / MS32) protein is Small ribosomal subunit protein uS4.